The following is a 513-amino-acid chain: ATP synthase subunit alpha (513 aa).

Residue 169–176 coordinates ATP; sequence GDRQIGKT.

This sequence belongs to the ATPase alpha/beta chains family. As to quaternary structure, F-type ATPases have 2 components, CF(1) - the catalytic core - and CF(0) - the membrane proton channel. CF(1) has five subunits: alpha(3), beta(3), gamma(1), delta(1), epsilon(1). CF(0) has three main subunits: a(1), b(2) and c(9-12). The alpha and beta chains form an alternating ring which encloses part of the gamma chain. CF(1) is attached to CF(0) by a central stalk formed by the gamma and epsilon chains, while a peripheral stalk is formed by the delta and b chains.

Its subcellular location is the cell inner membrane. The enzyme catalyses ATP + H2O + 4 H(+)(in) = ADP + phosphate + 5 H(+)(out). In terms of biological role, produces ATP from ADP in the presence of a proton gradient across the membrane. The alpha chain is a regulatory subunit. In Francisella tularensis subsp. novicida (strain U112), this protein is ATP synthase subunit alpha.